We begin with the raw amino-acid sequence, 904 residues long: Transcription factor E2F7 (904 aa).

The disordered stretch occupies residues 61 to 80 (TPDRNPITPVKPVDRQPQVE). Phosphoserine is present on S96. Residues 143 to 212 (RKQKSLGLLC…VAKNQYGWHG (70 aa)) mediate DNA binding. A compositionally biased stretch (basic and acidic residues) spans 252–269 (GERRKDGSPDPRDPHLLD). The disordered stretch occupies residues 252–283 (GERRKDGSPDPRDPHLLDFSEADYPSSSANSR). Residues 283-368 (RKDKSLRIMS…GRKPAFKWIG (86 aa)) mediate DNA binding. The residue at position 411 (S411) is a Phosphoserine. The segment at 560–628 (LSPESRSEED…VMPKKPSSST (69 aa)) is disordered. S833 carries the phosphoserine modification. The segment at 846-904 (AEQSPAPATPKSIQRRHRETFFKTPGSLGDPVFRRKERNQSRNTSSAQRRLEISSSGPD) is disordered. Residues 886-904 (SRNTSSAQRRLEISSSGPD) show a composition bias toward polar residues.

Belongs to the E2F/DP family. As to quaternary structure, interacts with HIF1A. Homodimer and heterodimer: mainly forms homodimers and, to a lesser extent, heterodimers with E2F8. Dimerization is important for DNA-binding. Interacts with MN1. Widely expressed with highest levels in skin and thymus and very low levels in brain, muscle and stomach. Expressed in trophoblast giant cells throughout placenta development (at protein level).

It is found in the nucleus. In terms of biological role, atypical E2F transcription factor that participates in various processes such as angiogenesis, polyploidization of specialized cells and DNA damage response. Mainly acts as a transcription repressor that binds DNA independently of DP proteins and specifically recognizes the E2 recognition site 5'-TTTC[CG]CGC-3'. Directly represses transcription of classical E2F transcription factors such as E2F1. Acts as a regulator of S-phase by recognizing and binding the E2-related site 5'-TTCCCGCC-3' and mediating repression of G1/S-regulated genes. Plays a key role in polyploidization of cells in placenta and liver by regulating the endocycle, probably by repressing genes promoting cytokinesis and antagonizing action of classical E2F proteins (E2F1, E2F2 and/or E2F3). Required for placental development by promoting polyploidization of trophoblast giant cells. Also involved in DNA damage response: up-regulated by p53/TP53 following genotoxic stress and acts as a downstream effector of p53/TP53-dependent repression by mediating repression of indirect p53/TP53 target genes involved in DNA replication. Acts as a promoter of sprouting angiogenesis, possibly by acting as a transcription activator: associates with HIF1A, recognizes and binds the VEGFA promoter, which is different from canonical E2 recognition site, and activates expression of the VEGFA gene. Acts as a negative regulator of keratinocyte differentiation. In Mus musculus (Mouse), this protein is Transcription factor E2F7 (E2f7).